The primary structure comprises 503 residues: Probable cytosol aminopeptidase (503 aa).

Mn(2+) is bound by residues lysine 270 and aspartate 275. Lysine 282 is an active-site residue. 3 residues coordinate Mn(2+): aspartate 293, aspartate 352, and glutamate 354. Arginine 356 is an active-site residue.

The protein belongs to the peptidase M17 family. Requires Mn(2+) as cofactor.

It is found in the cytoplasm. The enzyme catalyses Release of an N-terminal amino acid, Xaa-|-Yaa-, in which Xaa is preferably Leu, but may be other amino acids including Pro although not Arg or Lys, and Yaa may be Pro. Amino acid amides and methyl esters are also readily hydrolyzed, but rates on arylamides are exceedingly low.. It catalyses the reaction Release of an N-terminal amino acid, preferentially leucine, but not glutamic or aspartic acids.. Presumably involved in the processing and regular turnover of intracellular proteins. Catalyzes the removal of unsubstituted N-terminal amino acids from various peptides. The sequence is that of Probable cytosol aminopeptidase from Escherichia fergusonii (strain ATCC 35469 / DSM 13698 / CCUG 18766 / IAM 14443 / JCM 21226 / LMG 7866 / NBRC 102419 / NCTC 12128 / CDC 0568-73).